Here is a 245-residue protein sequence, read N- to C-terminus: Ribosomal RNA large subunit methyltransferase E (245 aa).

A disordered region spans residues 1–25 (MTKSPIGGNRSGRKLGQKVKKGKLK). Residues 11–25 (SGRKLGQKVKKGKLK) show a composition bias toward basic residues. Gly-81, Trp-83, Asp-104, Asp-120, and Asp-144 together coordinate S-adenosyl-L-methionine. The active-site Proton acceptor is the Lys-184.

This sequence belongs to the class I-like SAM-binding methyltransferase superfamily. RNA methyltransferase RlmE family.

The protein localises to the cytoplasm. The catalysed reaction is uridine(2552) in 23S rRNA + S-adenosyl-L-methionine = 2'-O-methyluridine(2552) in 23S rRNA + S-adenosyl-L-homocysteine + H(+). In terms of biological role, specifically methylates the uridine in position 2552 of 23S rRNA at the 2'-O position of the ribose in the fully assembled 50S ribosomal subunit. The sequence is that of Ribosomal RNA large subunit methyltransferase E from Rhizobium meliloti (strain 1021) (Ensifer meliloti).